The following is a 443-amino-acid chain: Thymidine phosphorylase (443 aa).

It belongs to the thymidine/pyrimidine-nucleoside phosphorylase family. Homodimer.

It carries out the reaction thymidine + phosphate = 2-deoxy-alpha-D-ribose 1-phosphate + thymine. Its pathway is pyrimidine metabolism; dTMP biosynthesis via salvage pathway; dTMP from thymine: step 1/2. The enzymes which catalyze the reversible phosphorolysis of pyrimidine nucleosides are involved in the degradation of these compounds and in their utilization as carbon and energy sources, or in the rescue of pyrimidine bases for nucleotide synthesis. In Shewanella woodyi (strain ATCC 51908 / MS32), this protein is Thymidine phosphorylase.